We begin with the raw amino-acid sequence, 214 residues long: Ribosomal RNA small subunit methyltransferase G (214 aa).

S-adenosyl-L-methionine-binding positions include glycine 81, methionine 86, 132–133 (VE), and arginine 147.

It belongs to the methyltransferase superfamily. RNA methyltransferase RsmG family.

It localises to the cytoplasm. The catalysed reaction is guanosine(527) in 16S rRNA + S-adenosyl-L-methionine = N(7)-methylguanosine(527) in 16S rRNA + S-adenosyl-L-homocysteine. Its function is as follows. Specifically methylates the N7 position of guanine in position 527 of 16S rRNA. The chain is Ribosomal RNA small subunit methyltransferase G from Ectopseudomonas mendocina (strain ymp) (Pseudomonas mendocina).